The chain runs to 500 residues: Perfringolysin O (500 aa).

Positions 1-28 (MIRFKKTKLIASIAMALCLFSQPVISFS) are cleaved as a signal peptide. 4 beta stranded membrane-spanning segments follow: residues 189-202 (KSQISSALNVNAKV), 209-218 (VDFNAVANNE), 287-296 (SKDVQAAFKA), and 304-316 (KNSQQYKDIYENS). Positions 458 to 468 (ECTGLAWEWWR) match the Conserved undecapeptide motif. The Cholesterol binding motif lies at 490 to 491 (TL).

This sequence belongs to the cholesterol-dependent cytolysin family. In terms of assembly, homooligomeric pore complex of 35 to 50 subunits; when inserted in the host membrane.

It is found in the secreted. The protein resides in the host cell membrane. Its function is as follows. A cholesterol-dependent toxin that causes cytolysis by forming pores in cholesterol containing host membranes. After binding to target membranes, the protein assembles into a pre-pore complex. A conformation change leads to insertion in the host membrane and formation of an oligomeric pore complex. Cholesterol is required for binding to host cell membranes, membrane insertion and pore formation; cholesterol binding is mediated by a Thr-Leu pair in the C-terminus. Can be reversibly inactivated by oxidation. The protein is Perfringolysin O (pfo) of Clostridium perfringens (strain ATCC 13124 / DSM 756 / JCM 1290 / NCIMB 6125 / NCTC 8237 / Type A).